The chain runs to 23 residues: Septenin 2a (23 aa).

Expressed in skin glands.

It localises to the secreted. May act as an antimicrobial peptide. In Osteopilus septentrionalis (Cuban treefrog), this protein is Septenin 2a.